Here is a 453-residue protein sequence, read N- to C-terminus: Ribose 1,5-bisphosphate phosphokinase PhnN (453 aa).

Residues 1–21 (MHGSTGFVQGTRPAGDQADPL) form a disordered region. The interval 1-271 (MHGSTGFVQG…SGQGERASLP (271 aa)) is unknown. The segment at 272–453 (HSGRIFFCVG…KLLDILRQAK (182 aa)) is ribose 1,5-bisphosphokinase.

It in the C-terminal section; belongs to the ribose 1,5-bisphosphokinase family.

The catalysed reaction is alpha-D-ribose 1,5-bisphosphate + ATP = 5-phospho-alpha-D-ribose 1-diphosphate + ADP. It functions in the pathway metabolic intermediate biosynthesis; 5-phospho-alpha-D-ribose 1-diphosphate biosynthesis; 5-phospho-alpha-D-ribose 1-diphosphate from D-ribose 5-phosphate (route II): step 3/3. Functionally, catalyzes the phosphorylation of ribose 1,5-bisphosphate to 5-phospho-D-ribosyl alpha-1-diphosphate (PRPP). The polypeptide is Ribose 1,5-bisphosphate phosphokinase PhnN (phnN) (Janthinobacterium sp. (strain Marseille) (Minibacterium massiliensis)).